The chain runs to 307 residues: Malate dehydrogenase (307 aa).

Residues 8–13 and aspartate 32 contribute to the NAD(+) site; that span reads GAGNVG. Positions 81 and 87 each coordinate substrate. NAD(+) contacts are provided by residues asparagine 94 and 117-119; that span reads VSN. Substrate-binding residues include asparagine 119 and arginine 150. The Proton acceptor role is filled by histidine 174.

This sequence belongs to the LDH/MDH superfamily. MDH type 3 family.

It carries out the reaction (S)-malate + NAD(+) = oxaloacetate + NADH + H(+). In terms of biological role, catalyzes the reversible oxidation of malate to oxaloacetate. This Dehalococcoides mccartyi (strain CBDB1) protein is Malate dehydrogenase.